Reading from the N-terminus, the 397-residue chain is uncharacterized protein (397 aa).

Residues cysteine 47, cysteine 53, cysteine 56, and cysteine 131 each coordinate [4Fe-4S] cluster. 4 residues coordinate S-adenosyl-L-methionine: glutamine 235, phenylalanine 262, glutamate 282, and aspartate 328. Cysteine 354 functions as the Nucleophile in the catalytic mechanism.

Belongs to the class I-like SAM-binding methyltransferase superfamily. RNA M5U methyltransferase family.

This is an uncharacterized protein from Zymomonas mobilis subsp. mobilis (strain ATCC 31821 / ZM4 / CP4).